The following is a 510-amino-acid chain: Bifunctional purine biosynthesis protein PurH (510 aa).

The MGS-like domain maps to 1–143; it reads MTKRALISVS…KNHDAVLVLV (143 aa).

It belongs to the PurH family.

The enzyme catalyses (6R)-10-formyltetrahydrofolate + 5-amino-1-(5-phospho-beta-D-ribosyl)imidazole-4-carboxamide = 5-formamido-1-(5-phospho-D-ribosyl)imidazole-4-carboxamide + (6S)-5,6,7,8-tetrahydrofolate. It carries out the reaction IMP + H2O = 5-formamido-1-(5-phospho-D-ribosyl)imidazole-4-carboxamide. It functions in the pathway purine metabolism; IMP biosynthesis via de novo pathway; 5-formamido-1-(5-phospho-D-ribosyl)imidazole-4-carboxamide from 5-amino-1-(5-phospho-D-ribosyl)imidazole-4-carboxamide (10-formyl THF route): step 1/1. Its pathway is purine metabolism; IMP biosynthesis via de novo pathway; IMP from 5-formamido-1-(5-phospho-D-ribosyl)imidazole-4-carboxamide: step 1/1. This Deinococcus radiodurans (strain ATCC 13939 / DSM 20539 / JCM 16871 / CCUG 27074 / LMG 4051 / NBRC 15346 / NCIMB 9279 / VKM B-1422 / R1) protein is Bifunctional purine biosynthesis protein PurH.